Here is a 506-residue protein sequence, read N- to C-terminus: Maturase K (506 aa).

It belongs to the intron maturase 2 family. MatK subfamily.

It is found in the plastid. The protein resides in the chloroplast. Functionally, usually encoded in the trnK tRNA gene intron. Probably assists in splicing its own and other chloroplast group II introns. The chain is Maturase K from Sullivantia sullivantii (Sullivant's coolwort).